The sequence spans 189 residues: Hypoxanthine/guanine phosphoribosyltransferase (189 aa).

The protein belongs to the purine/pyrimidine phosphoribosyltransferase family. Archaeal HPRT subfamily. In terms of assembly, homodimer.

The protein localises to the cytoplasm. It carries out the reaction IMP + diphosphate = hypoxanthine + 5-phospho-alpha-D-ribose 1-diphosphate. The enzyme catalyses GMP + diphosphate = guanine + 5-phospho-alpha-D-ribose 1-diphosphate. The protein operates within purine metabolism; IMP biosynthesis via salvage pathway; IMP from hypoxanthine: step 1/1. Catalyzes a salvage reaction resulting in the formation of IMP that is energically less costly than de novo synthesis. The polypeptide is Hypoxanthine/guanine phosphoribosyltransferase (Methanothermus fervidus (strain ATCC 43054 / DSM 2088 / JCM 10308 / V24 S)).